The chain runs to 500 residues: Type-2 serine--tRNA ligase (500 aa).

L-serine is bound at residue alanine 305. Residue cysteine 307 coordinates Zn(2+). An L-serine-binding site is contributed by arginine 337. ATP contacts are provided by residues 337–339 (RYE) and 348–349 (RV). Residues 354–356 (RIE) and glutamine 401 contribute to the L-serine site. A Zn(2+)-binding site is contributed by glutamate 356. Glutamate 430 contacts ATP. Position 433 (asparagine 433) interacts with L-serine. Residue cysteine 459 participates in Zn(2+) binding. Position 466 (arginine 466) interacts with ATP.

It belongs to the class-II aminoacyl-tRNA synthetase family. Type-2 seryl-tRNA synthetase subfamily. As to quaternary structure, homodimer. Requires Zn(2+) as cofactor.

It localises to the cytoplasm. The enzyme catalyses tRNA(Ser) + L-serine + ATP = L-seryl-tRNA(Ser) + AMP + diphosphate + H(+). It carries out the reaction tRNA(Sec) + L-serine + ATP = L-seryl-tRNA(Sec) + AMP + diphosphate + H(+). Its pathway is aminoacyl-tRNA biosynthesis; selenocysteinyl-tRNA(Sec) biosynthesis; L-seryl-tRNA(Sec) from L-serine and tRNA(Sec): step 1/1. Functionally, catalyzes the attachment of serine to tRNA(Ser). Is also able to aminoacylate tRNA(Sec) with serine, to form the misacylated tRNA L-seryl-tRNA(Sec), which will be further converted into selenocysteinyl-tRNA(Sec). In Methanothrix thermoacetophila (strain DSM 6194 / JCM 14653 / NBRC 101360 / PT) (Methanosaeta thermophila), this protein is Type-2 serine--tRNA ligase.